Consider the following 247-residue polypeptide: Aliphatic sulfonates import ATP-binding protein SsuB 2 (247 aa).

Residues 28 to 242 (VSVRGLQRRY…ALRPILLEEL (215 aa)) enclose the ABC transporter domain. 60-67 (GESGCGKT) provides a ligand contact to ATP.

Belongs to the ABC transporter superfamily. Aliphatic sulfonates importer (TC 3.A.1.17.2) family. As to quaternary structure, the complex is composed of two ATP-binding proteins (SsuB), two transmembrane proteins (SsuC) and a solute-binding protein (SsuA).

It is found in the cell inner membrane. The catalysed reaction is ATP + H2O + aliphatic sulfonate-[sulfonate-binding protein]Side 1 = ADP + phosphate + aliphatic sulfonateSide 2 + [sulfonate-binding protein]Side 1.. Functionally, part of the ABC transporter complex SsuABC involved in aliphatic sulfonates import. Responsible for energy coupling to the transport system. In Paraburkholderia xenovorans (strain LB400), this protein is Aliphatic sulfonates import ATP-binding protein SsuB 2.